We begin with the raw amino-acid sequence, 94 residues long: MFTLILQIALGIMAVSTFLYVIRVIKGPTVPDRVVALDAIGINLIAITALVSILLKTSAFLDIILLLGILSFIGTIAFSKFLEKGEIIENDRNR.

The next 3 helical transmembrane spans lie at phenylalanine 2–isoleucine 22, valine 34–leucine 54, and alanine 59–serine 79.

This sequence belongs to the CPA3 antiporters (TC 2.A.63) subunit F family. Forms a heterooligomeric complex that consists of seven subunits: MrpA, MrpB, MrpC, MrpD, MrpE, MrpF and MrpG.

Its subcellular location is the cell membrane. Mrp complex is a Na(+)/H(+) antiporter that is considered to be the major Na(+) excretion system in B.subtilis. Has a major role in Na(+) resistance and a minor role in Na(+)- and K(+)-dependent pH homeostasis as compared to TetB. MrpA may be the actual Na(+)/H(+) antiporter, although the six other Mrp proteins are all required for Na(+)/H(+) antiport activity and Na(+) resistance. MrpA is required for initiation of sporulation when external Na(+) concentration increases. Also transports Li(+) but not K(+), Ca(2+) or Mg(2+). Its function is as follows. Involved in cholate and Na(+) efflux activities, which may be mechanistically coupled. Does not require other Mrp proteins for its own function. This is Na(+)/H(+) antiporter subunit F (mrpF) from Bacillus subtilis (strain 168).